The sequence spans 270 residues: Triosephosphate isomerase (270 aa).

Asn-27–Lys-29 is a substrate binding site. His-114 (electrophile) is an active-site residue. The Proton acceptor role is filled by Glu-184. Substrate is bound by residues Gly-190, Ser-230, and Gly-251 to Gly-252.

It belongs to the triosephosphate isomerase family. Homodimer.

The protein resides in the cytoplasm. The catalysed reaction is D-glyceraldehyde 3-phosphate = dihydroxyacetone phosphate. The protein operates within carbohydrate biosynthesis; gluconeogenesis. Its pathway is carbohydrate degradation; glycolysis; D-glyceraldehyde 3-phosphate from glycerone phosphate: step 1/1. Its function is as follows. Involved in the gluconeogenesis. Catalyzes stereospecifically the conversion of dihydroxyacetone phosphate (DHAP) to D-glyceraldehyde-3-phosphate (G3P). The chain is Triosephosphate isomerase from Chlamydia muridarum (strain MoPn / Nigg).